The following is a 1051-amino-acid chain: Leucine zipper protein 1 (1051 aa).

An N-acetylalanine modification is found at A2. Residues 11-354 adopt a coiled-coil conformation; that stretch reads ASNRHLRFKL…KLQVKKQKEL (344 aa). 4 disordered regions span residues 247–293, 374–401, 432–554, and 569–601; these read ISST…KDLN, RTKL…HKRE, AAKA…SQVT, and ASSQ…SKAP. A compositionally biased stretch (basic and acidic residues) spans 254–293; that stretch reads KESRRKGSLDYLKQVENETRDKSENEKNRNQEDNKVKDLN. A phosphoserine mark is found at S256, S261, S395, S513, S571, S575, S612, and S660. Residues 569–578 show a composition bias toward polar residues; that stretch reads ASSQRASSEG. The interval 675 to 727 is disordered; it reads VNTTITPEPEPKLQPNSREKVKSRGGTRTPLFENDKNAAVENDSAKSMRSSSN. T680 carries the phosphothreonine modification. S691 is subject to Phosphoserine. Positions 707–720 are enriched in basic and acidic residues; that stretch reads ENDKNAAVENDSAK. S746 carries the phosphoserine modification. The span at 789–799 shows a compositional bias: low complexity; it reads VTSKVTSSITI. The disordered stretch occupies residues 789-837; the sequence is VTSKVTSSITIYPSDSSGPRAVPTEAPRERHTSTSNIQVGPPELTSVSN. Residues 834–884 form a required for interaction with FLNA region; sequence SVSNHISSPLELSIHKHDITLQLTEAERVGDGSPKNRAETVVSRSSILIKP. S906 carries the post-translational modification Phosphoserine. A compositionally biased stretch (basic and acidic residues) spans 929–938; that stretch reads RDLKCSEDPP. The interval 929 to 1000 is disordered; that stretch reads RDLKCSEDPP…TQSSLTASEV (72 aa). Polar residues-rich tracts occupy residues 946-958 and 989-999; these read EATN…SSTD and RRTQSSLTASE. The residue at position 957 (T957) is a Phosphothreonine. Phosphoserine is present on S993.

As to quaternary structure, component of the CERF-1 ISWI chromatin remodeling complex (also called the CECR2-containing remodeling factor (CERF) complex) at least composed of CECR2 and SMARCA1. Component of the CERF-5 ISWI chromatin remodeling complex at least composed of CECR2 and SMARCA5/SNF2H. LUZP1 is detected as part of the CERF-1 and CERF-5 complexes in embryonic stem (ES) cells where it is involved in complex stabilization but is not detected in the complexes in the testis. Interacts (via C-terminus) with LIMA1/EPLIN; both proteins restrict ciliation and may work together to regulate this process. Interacts with myosin light chain MYL9; the interaction results in inhibition of phosphorylation of MYL9 by DAPK3. Interacts with DAPK3; the interaction is likely to occur throughout the cell cycle and reduces the LUZP1-mediated suppression of MYL9 phosphorylation. Interacts with the chromosomal passenger complex (CPC); CPC kinase activity is required for localization of LUZP1 to the centromere. As to expression, expressed in cerebral cortex, cerebellum, hippocampus and brain stem.

Its subcellular location is the cytoplasm. The protein resides in the cytoskeleton. The protein localises to the microtubule organizing center. It is found in the centrosome. It localises to the cilium basal body. Its subcellular location is the midbody. The protein resides in the chromosome. The protein localises to the centromere. It is found in the spindle. It localises to the stress fiber. Its subcellular location is the nucleus. The protein resides in the cell projection. The protein localises to the dendrite. It is found in the perikaryon. It localises to the cell junction. Its subcellular location is the tight junction. In terms of biological role, F-actin cross-linking protein. Stabilizes actin and acts as a negative regulator of primary cilium formation. Positively regulates the phosphorylation of both myosin II and protein phosphatase 1 regulatory subunit PPP1R12A/MYPT1 and promotes the assembly of myosin II stacks within actin stress fibers. Inhibits the phosphorylation of myosin light chain MYL9 by DAPK3 and suppresses the constriction velocity of the contractile ring during cytokinesis. Binds to microtubules and promotes epithelial cell apical constriction by up-regulating levels of diphosphorylated myosin light chain (MLC) through microtubule-dependent inhibition of MLC dephosphorylation by myosin phosphatase. Involved in regulation of cell migration, nuclear size and centriole number, probably through regulation of the actin cytoskeleton. Component of the CERF-1 and CERF-5 chromatin remodeling complexes in embryonic stem cells where it acts to stabilize the complexes. Plays a role in embryonic brain and cardiovascular development. The sequence is that of Leucine zipper protein 1 (Luzp1) from Rattus norvegicus (Rat).